Here is a 198-residue protein sequence, read N- to C-terminus: 7-methyl-GTP pyrophosphatase (198 aa).

Catalysis depends on aspartate 69, which acts as the Proton acceptor.

It belongs to the Maf family. YceF subfamily. Requires a divalent metal cation as cofactor.

The protein localises to the cytoplasm. The catalysed reaction is N(7)-methyl-GTP + H2O = N(7)-methyl-GMP + diphosphate + H(+). Functionally, nucleoside triphosphate pyrophosphatase that hydrolyzes 7-methyl-GTP (m(7)GTP). May have a dual role in cell division arrest and in preventing the incorporation of modified nucleotides into cellular nucleic acids. The chain is 7-methyl-GTP pyrophosphatase from Yersinia pestis bv. Antiqua (strain Antiqua).